A 305-amino-acid chain; its full sequence is Methionyl-tRNA formyltransferase (305 aa).

111–114 (SLLP) is a (6S)-5,6,7,8-tetrahydrofolate binding site.

Belongs to the Fmt family.

It catalyses the reaction L-methionyl-tRNA(fMet) + (6R)-10-formyltetrahydrofolate = N-formyl-L-methionyl-tRNA(fMet) + (6S)-5,6,7,8-tetrahydrofolate + H(+). Attaches a formyl group to the free amino group of methionyl-tRNA(fMet). The formyl group appears to play a dual role in the initiator identity of N-formylmethionyl-tRNA by promoting its recognition by IF2 and preventing the misappropriation of this tRNA by the elongation apparatus. The sequence is that of Methionyl-tRNA formyltransferase from Helicobacter pylori (strain HPAG1).